A 620-amino-acid chain; its full sequence is Zinc finger protein GLIS1 (620 aa).

Positions 108 to 132 (PLTGDLGGPSKRARPGPASTDSHEG) are disordered. The segment at 195–220 (QACRWVDCCAAYEQQEELVRHIEKSH) adopts a C2H2-type 1 zinc-finger fold. The segment at 229–256 (FTCFWAGCVRRYKPFNARYKLLIHMRVH) adopts a C2H2-type 2; atypical zinc-finger fold. 3 consecutive C2H2-type zinc fingers follow at residues 262-286 (NKCMFEGCSKAFSRLENLKIHLRSH), 292-316 (YLCQHPGCQKAFSNSSDRAKHQRTH), and 322-346 (YACQIPGCSKRYTDPSSLRKHVKAH). Positions 340 to 356 (RKHVKAHSAKEQQVRKK) match the Bipartite nuclear localization signal motif. Positions 414–515 (ASGLLPPAHD…PPLPSPQGYQ (102 aa)) are disordered. Residues 477–488 (SSQSHSPGGQPF) show a composition bias toward low complexity. The segment covering 489–510 (PTLPSKPSYPPFQSPPPPPLPS) has biased composition (pro residues).

The protein belongs to the GLI C2H2-type zinc-finger protein family. As to quaternary structure, interacts with KLF4. Interacts with POU5F1 and/or POU5F1B. Interacts with SOX2.

The protein localises to the nucleus. In terms of biological role, acts both as a repressor and an activator of transcription. Binds to the consensus sequence 5'-GACCACCCAC-3'. By controlling the expression of genes involved in cell differentiation inhibits the lineage commitment of multipotent cells. Prevents, for instance, the differentiation of multipotent mesenchymal cells into adipocyte and osteoblast. The polypeptide is Zinc finger protein GLIS1 (Homo sapiens (Human)).